Consider the following 485-residue polypeptide: Pumilio domain-containing protein 7 (485 aa).

Residues 29 to 72 form a disordered region; sequence NKTHKNKNPKPPVKLLPYRHGSNTTSSDSDSYIFNSGSGSSDAE. Positions 49-71 are enriched in polar residues; it reads GSNTTSSDSDSYIFNSGSGSSDA. Pumilio repeat units lie at residues 86–124, 128–163, 164–200, 201–236, 237–279, 287–324, 326–361, and 370–411; these read DVLL…AVFE, ESTT…ELLR, QMID…QLIQ, ELST…TFFV, HFLS…FRIQ, CIVR…TIID, CLLR…EMME, and DVES…RELP. The interval 439 to 454 is RNA-binding; that stretch reads FSSGKKIIDSVMRHGV.

Its function is as follows. RNA-binding protein that binds to the consensus sequence 5'-CUCUGUAUCUUGU-3' in mRNA 3'-UTRs and modulates mRNA expression and stability. Functions redundantly with puf-5 and puf-6 in oocyte formation and organization, early embryonic cell divisions, and repression of expression of glp-1 and other maternal mRNAs in late oogenesis. The polypeptide is Pumilio domain-containing protein 7 (Caenorhabditis elegans).